Here is a 130-residue protein sequence, read N- to C-terminus: Small ribosomal subunit protein uS11 (130 aa).

Residues 111–130 (IRDVTPVPHNGSRPPKRRRA) are disordered.

The protein belongs to the universal ribosomal protein uS11 family. In terms of assembly, part of the 30S ribosomal subunit. Interacts with proteins S7 and S18. Binds to IF-3.

In terms of biological role, located on the platform of the 30S subunit, it bridges several disparate RNA helices of the 16S rRNA. Forms part of the Shine-Dalgarno cleft in the 70S ribosome. This Lactobacillus acidophilus (strain ATCC 700396 / NCK56 / N2 / NCFM) protein is Small ribosomal subunit protein uS11.